Reading from the N-terminus, the 305-residue chain is MRFLFYMLLACSAVVAGEQAAAAKELRLNSFVHRSFDAHIHAQRLLRDRRSVDEERGLPTVIEKTKTLFSTKVTDKTLQRWAANKKSPQHALIRLDLDNAGKDLFTKAKFADWVSFMTKRNPQNAEAAMLSALMTRYSDDVLSGMLIAAKKAPDTKTIATNLQIQQLRGWMKKGKTADDVFNLFNLKGKATSLDDLVSDGQFAPWVTYVTALNKGDPKKTNMMVVKTLTTYNKKTHKGVYDMLSASKNKQLAADLQRGQFDNWLANNVQFYDVSAMVGAKGTPRGSPQRLFVKDYVAAYNKKHQL.

A signal peptide spans 1-16 (MRFLFYMLLACSAVVA). The RxLR-dEER signature appears at 44 to 56 (RLLRDRRSVDEER).

This sequence belongs to the RxLR effector family.

It localises to the secreted. The protein resides in the host nucleus. It is found in the host nucleolus. Functionally, effector that enhances P.infestans colonization of Nicotiana benthamiana leaves. This chain is RxLR effector protein PexRD25, found in Phytophthora infestans (strain T30-4) (Potato late blight agent).